A 150-amino-acid polypeptide reads, in one-letter code: Arginine repressor (150 aa).

Belongs to the ArgR family.

Its subcellular location is the cytoplasm. It functions in the pathway amino-acid biosynthesis; L-arginine biosynthesis [regulation]. Functionally, regulates arginine biosynthesis genes. This Thermoanaerobacter sp. (strain X514) protein is Arginine repressor.